Here is a 222-residue protein sequence, read N- to C-terminus: 3-dehydroquinate dehydratase (222 aa).

Residues 29–31 (ELR) and arginine 55 each bind 3-dehydroquinate. Histidine 112 acts as the Proton donor/acceptor in catalysis. Residue lysine 139 is the Schiff-base intermediate with substrate of the active site. 3-dehydroquinate is bound by residues arginine 178, serine 199, and glutamine 203.

It belongs to the type-I 3-dehydroquinase family. In terms of assembly, homodimer.

The enzyme catalyses 3-dehydroquinate = 3-dehydroshikimate + H2O. The protein operates within metabolic intermediate biosynthesis; chorismate biosynthesis; chorismate from D-erythrose 4-phosphate and phosphoenolpyruvate: step 3/7. In terms of biological role, involved in the third step of the chorismate pathway, which leads to the biosynthesis of aromatic amino acids. Catalyzes the cis-dehydration of 3-dehydroquinate (DHQ) and introduces the first double bond of the aromatic ring to yield 3-dehydroshikimate. This chain is 3-dehydroquinate dehydratase, found in Dehalococcoides mccartyi (strain ATCC BAA-2100 / JCM 16839 / KCTC 5957 / BAV1).